The primary structure comprises 203 residues: Large ribosomal subunit protein bL25 (203 aa).

The protein belongs to the bacterial ribosomal protein bL25 family. CTC subfamily. Part of the 50S ribosomal subunit; part of the 5S rRNA/L5/L18/L25 subcomplex. Contacts the 5S rRNA. Binds to the 5S rRNA independently of L5 and L18.

This is one of the proteins that binds to the 5S RNA in the ribosome where it forms part of the central protuberance. The polypeptide is Large ribosomal subunit protein bL25 (Rickettsia africae (strain ESF-5)).